Here is a 496-residue protein sequence, read N- to C-terminus: L-arabinose isomerase (496 aa).

Glu-302, Glu-329, His-346, and His-445 together coordinate Mn(2+).

Belongs to the arabinose isomerase family. It depends on Mn(2+) as a cofactor.

It carries out the reaction beta-L-arabinopyranose = L-ribulose. The protein operates within carbohydrate degradation; L-arabinose degradation via L-ribulose; D-xylulose 5-phosphate from L-arabinose (bacterial route): step 1/3. In terms of biological role, catalyzes the conversion of L-arabinose to L-ribulose. This is L-arabinose isomerase from Thermotoga maritima (strain ATCC 43589 / DSM 3109 / JCM 10099 / NBRC 100826 / MSB8).